A 498-amino-acid chain; its full sequence is ATP synthase subunit beta, chloroplastic (498 aa).

Residue 172–179 (GGAGVGKT) coordinates ATP.

Belongs to the ATPase alpha/beta chains family. F-type ATPases have 2 components, CF(1) - the catalytic core - and CF(0) - the membrane proton channel. CF(1) has five subunits: alpha(3), beta(3), gamma(1), delta(1), epsilon(1). CF(0) has four main subunits: a(1), b(1), b'(1) and c(9-12).

Its subcellular location is the plastid. The protein localises to the chloroplast thylakoid membrane. It catalyses the reaction ATP + H2O + 4 H(+)(in) = ADP + phosphate + 5 H(+)(out). In terms of biological role, produces ATP from ADP in the presence of a proton gradient across the membrane. The catalytic sites are hosted primarily by the beta subunits. The chain is ATP synthase subunit beta, chloroplastic from Phormium tenax (New Zealand flax).